A 296-amino-acid chain; its full sequence is Ribosomal RNA small subunit methyltransferase A (296 aa).

Residues asparagine 32, leucine 34, glycine 59, glutamate 80, aspartate 105, and asparagine 130 each contribute to the S-adenosyl-L-methionine site.

This sequence belongs to the class I-like SAM-binding methyltransferase superfamily. rRNA adenine N(6)-methyltransferase family. RsmA subfamily.

The protein localises to the cytoplasm. The catalysed reaction is adenosine(1518)/adenosine(1519) in 16S rRNA + 4 S-adenosyl-L-methionine = N(6)-dimethyladenosine(1518)/N(6)-dimethyladenosine(1519) in 16S rRNA + 4 S-adenosyl-L-homocysteine + 4 H(+). Functionally, specifically dimethylates two adjacent adenosines (A1518 and A1519) in the loop of a conserved hairpin near the 3'-end of 16S rRNA in the 30S particle. May play a critical role in biogenesis of 30S subunits. This is Ribosomal RNA small subunit methyltransferase A from Ligilactobacillus salivarius (strain UCC118) (Lactobacillus salivarius).